Reading from the N-terminus, the 244-residue chain is Phosphoadenosine 5'-phosphosulfate reductase (244 aa).

Residue cysteine 239 is the Nucleophile; cysteine thiosulfonate intermediate of the active site.

It belongs to the PAPS reductase family. CysH subfamily.

It is found in the cytoplasm. The enzyme catalyses [thioredoxin]-disulfide + sulfite + adenosine 3',5'-bisphosphate + 2 H(+) = [thioredoxin]-dithiol + 3'-phosphoadenylyl sulfate. It participates in sulfur metabolism; hydrogen sulfide biosynthesis; sulfite from sulfate: step 3/3. Its function is as follows. Catalyzes the formation of sulfite from phosphoadenosine 5'-phosphosulfate (PAPS) using thioredoxin as an electron donor. This Photorhabdus laumondii subsp. laumondii (strain DSM 15139 / CIP 105565 / TT01) (Photorhabdus luminescens subsp. laumondii) protein is Phosphoadenosine 5'-phosphosulfate reductase.